Reading from the N-terminus, the 672-residue chain is Zinc finger and BTB domain-containing protein 24 (672 aa).

The region spanning 39–105 (CDITLIVEDV…MYSAVVLVDE (67 aa)) is the BTB domain. Positions 136–208 (HMQVKRKRGR…GKRKIKQPIR (73 aa)) are disordered. The a.T hook 1 DNA-binding region spans 140-152 (KRKRGRPKKNQDL). Residues 148–158 (KNQDLSQKENP) are compositionally biased toward basic and acidic residues. Residues 160 to 171 (SELQAQTSSEIQ) show a composition bias toward polar residues. Residues 198 to 208 (EGKRKIKQPIR) are compositionally biased toward basic residues. The a.T hook 2 DNA-binding region spans 223–235 (PGKRGRRRKYPDT). 8 C2H2-type zinc fingers span residues 237 to 259 (ARCE…QRTH), 265 to 287 (FRCS…QRMH), 293 to 315 (YICT…MNLH), 321 to 343 (FTCE…NRVH), 349 to 371 (PECA…LRTH), 377 to 399 (FTCE…IRIH), 405 to 427 (YVCK…EVSH), and 433 to 455 (FSCS…IKTH). The disordered stretch occupies residues 453–492 (KTHNKENPPAQAESTDKPPQSAPEQQEQEQQQQQQTSGDK). Residues 476–487 (EQQEQEQQQQQQ) are compositionally biased toward low complexity.

This sequence belongs to the krueppel C2H2-type zinc-finger protein family.

The protein localises to the nucleus. Its function is as follows. May be involved in BMP2-induced transcription. This is Zinc finger and BTB domain-containing protein 24 (zbtb24) from Danio rerio (Zebrafish).